The chain runs to 338 residues: Glycerol-3-phosphate dehydrogenase [NAD(P)+] (338 aa).

NADPH is bound by residues S14, Y15, H35, and K109. Positions 109, 138, and 140 each coordinate sn-glycerol 3-phosphate. Residue A142 participates in NADPH binding. The sn-glycerol 3-phosphate site is built by K194, D247, S257, R258, and N259. K194 acts as the Proton acceptor in catalysis. R258 provides a ligand contact to NADPH. NADPH is bound by residues V282 and E284.

The protein belongs to the NAD-dependent glycerol-3-phosphate dehydrogenase family.

The protein localises to the cytoplasm. The catalysed reaction is sn-glycerol 3-phosphate + NAD(+) = dihydroxyacetone phosphate + NADH + H(+). It catalyses the reaction sn-glycerol 3-phosphate + NADP(+) = dihydroxyacetone phosphate + NADPH + H(+). Its pathway is membrane lipid metabolism; glycerophospholipid metabolism. Its function is as follows. Catalyzes the reduction of the glycolytic intermediate dihydroxyacetone phosphate (DHAP) to sn-glycerol 3-phosphate (G3P), the key precursor for phospholipid synthesis. This is Glycerol-3-phosphate dehydrogenase [NAD(P)+] from Shewanella baltica (strain OS195).